Here is a 220-residue protein sequence, read N- to C-terminus: CRIB domain-containing protein RIC3 (220 aa).

Residues 28 to 41 form the CRIB domain; it reads IGFPTDVKHVAHIG. The segment at 39–220 is disordered; it reads HIGSDGPATN…CNDNNISDKE (182 aa). Residues 61–77 are compositionally biased toward polar residues; sequence NENGQVVSRADANNNQI. Positions 108 to 121 are enriched in low complexity; it reads NGSPPRRNSSASAS. Composition is skewed to basic residues over residues 127-136 and 172-184; these read NTRRHHRSRH and HSRKSTSRHRKPK. The segment covering 209 to 220 has biased composition (polar residues); the sequence is DTCNDNNISDKE.

As to quaternary structure, interacts with ARAC11/ROP1. In terms of tissue distribution, expressed in flowers and pollen.

The protein localises to the cytoplasm. Functions as a downstream effector of Rho-related GTP binding proteins of the 'Rho of Plants' (ROPs) family. Participates in the propagation of ROP GTPase signals in specific cellular responses. Functions as a downstream effector of ARAC11/ROP1 to activate calcium signaling that leads to F-actin disassembly associated with exocytosis in the tip of the growing pollen tube. Counteracts the ARAC11/ROP1-RIC4 pathway, which promotes apical F-actin assembly associated with vesicle accumulation, to control actin dynamics and pollen tube apical growth. The chain is CRIB domain-containing protein RIC3 (RIC3) from Arabidopsis thaliana (Mouse-ear cress).